Consider the following 261-residue polypeptide: Sepiapterin reductase (261 aa).

Met-1 is subject to N-acetylmethionine. 15–21 (GASRGFG) is an NADP(+) binding site. Phosphoserine is present on Ser-33. 43–44 (RS) contributes to the NADP(+) binding site. Ser-46 bears the Phosphoserine mark. 70 to 71 (DL) is an NADP(+) binding site. Residues 158-159 (SL) and Tyr-171 each bind substrate. Lys-175 is an NADP(+) binding site. Ser-196 bears the Phosphoserine mark. Position 200 (Gly-200) interacts with substrate. 202-207 (LDNDMQ) serves as a coordination point for NADP(+). Phosphoserine is present on Ser-214. Positions 222 and 258 each coordinate substrate.

It belongs to the sepiapterin reductase family. As to quaternary structure, homodimer.

It localises to the cytoplasm. It catalyses the reaction L-erythro-7,8-dihydrobiopterin + NADP(+) = L-sepiapterin + NADPH + H(+). The enzyme catalyses (6R)-L-erythro-5,6,7,8-tetrahydrobiopterin + 2 NADP(+) = 6-pyruvoyl-5,6,7,8-tetrahydropterin + 2 NADPH + 2 H(+). In terms of biological role, catalyzes the final one or two reductions in tetra-hydrobiopterin biosynthesis to form 5,6,7,8-tetrahydrobiopterin. In Mus musculus (Mouse), this protein is Sepiapterin reductase (Spr).